The chain runs to 132 residues: MSMTDNVADMLTRIRNAYKSKLINVSFPSSKIKISILDVLQKEGYIKDYITTQKNNISYTEVALKYSVNGDASICEIHRVSKPGKRVYSPIKDLKGYYNNMGIYILSTPYGVMSDREAHIKNVGGEVICKVF.

Belongs to the universal ribosomal protein uS8 family. As to quaternary structure, part of the 30S ribosomal subunit. Contacts proteins S5 and S12.

Its function is as follows. One of the primary rRNA binding proteins, it binds directly to 16S rRNA central domain where it helps coordinate assembly of the platform of the 30S subunit. This Rickettsia massiliae (strain Mtu5) protein is Small ribosomal subunit protein uS8.